Consider the following 411-residue polypeptide: Tetra-peptide repeat homeobox protein 1 (411 aa).

Residues 3-24 (SLREQQLQVWFKNRRAKLARER) constitute a DNA-binding region (homeobox). Disordered stretches follow at residues 20 to 63 (LARE…SGIL), 88 to 246 (IPAA…ISGP), 286 to 340 (PILS…SPDA), and 363 to 411 (LEGS…LLDL). Positions 27-55 (QQQPQRVPGQRGRGARAAPLVPAASASAP) are enriched in low complexity. 2 stretches are compositionally biased toward pro residues: residues 95-139 (GPGP…PGPI) and 149-246 (FRGP…ISGP). Residues 295–307 (SPGSLPGLAPILG) show a composition bias toward low complexity. Positions 319 to 335 (APIPGPGSLPAPAPLWP) are enriched in pro residues. 2 stretches are compositionally biased toward polar residues: residues 366–376 (SSVSTMTSQYQ) and 388–402 (GSQPQEEGGSVNENH).

It belongs to the paired homeobox family.

It localises to the nucleus. In terms of biological role, transcription factor expressed after fertilization required for zygotic genome activation (ZGA), a critical event in early embryonic development during which the developmental control passes from maternally provided mRNAs to the expression of the zygotic genome after fertilization. Binds and activates expression of key ZGA marker genes, such as NANOGNB, ZSCAN4, DUXB, KLF5 and DPPA3. Binds to regulatory DNA sequences containing a 5'-TAATCC-3' sequence motif. The sequence is that of Tetra-peptide repeat homeobox protein 1 from Homo sapiens (Human).